The sequence spans 406 residues: Coenzyme A biosynthesis bifunctional protein CoaBC (406 aa).

The interval 1–191 (MLNNRNVLLC…ETSAPLEGKH (191 aa)) is phosphopantothenoylcysteine decarboxylase. The active-site Proton donor is the C157. The interval 192–406 (VVITAGPTRE…ALSKQTGERS (215 aa)) is phosphopantothenate--cysteine ligase. The CTP site is built by D281, K291, F325, K339, and K343.

The protein in the N-terminal section; belongs to the HFCD (homo-oligomeric flavin containing Cys decarboxylase) superfamily. It in the C-terminal section; belongs to the PPC synthetase family. It depends on Mg(2+) as a cofactor. FMN is required as a cofactor.

The catalysed reaction is N-[(R)-4-phosphopantothenoyl]-L-cysteine + H(+) = (R)-4'-phosphopantetheine + CO2. The enzyme catalyses (R)-4'-phosphopantothenate + L-cysteine + CTP = N-[(R)-4-phosphopantothenoyl]-L-cysteine + CMP + diphosphate + H(+). It functions in the pathway cofactor biosynthesis; coenzyme A biosynthesis; CoA from (R)-pantothenate: step 2/5. It participates in cofactor biosynthesis; coenzyme A biosynthesis; CoA from (R)-pantothenate: step 3/5. Catalyzes two sequential steps in the biosynthesis of coenzyme A. In the first step cysteine is conjugated to 4'-phosphopantothenate to form 4-phosphopantothenoylcysteine. In the second step the latter compound is decarboxylated to form 4'-phosphopantotheine. The protein is Coenzyme A biosynthesis bifunctional protein CoaBC of Bacillus subtilis (strain 168).